The following is a 413-amino-acid chain: Ribulose bisphosphate carboxylase/oxygenase activase, chloroplastic (413 aa).

A chloroplast-targeting transit peptide spans 1-54 (MAATVSTIGAVNRTTLNNSNYGGLVPNSAFLGSRLKVSSRFTTSKMVTGNFKIV). Position 162–169 (162–169 (GGKGQGKS)) interacts with ATP.

The protein belongs to the RuBisCO activase family.

The protein localises to the plastid. It is found in the chloroplast stroma. Activation of RuBisCO (ribulose-1,5-bisphosphate carboxylase/oxygenase; EC 4.1.1.39) involves the ATP-dependent carboxylation of the epsilon-amino group of lysine leading to a carbamate structure. This is Ribulose bisphosphate carboxylase/oxygenase activase, chloroplastic from Cucumis sativus (Cucumber).